Reading from the N-terminus, the 529-residue chain is Peptide chain release factor 3 (529 aa).

The 270-residue stretch at 11 to 280 (SKRRTFAIIS…SLIKWAPSPI (270 aa)) folds into the tr-type G domain. GTP is bound by residues 20 to 27 (SHPDAGKT), 88 to 92 (DTPGH), and 142 to 145 (NKLD).

The protein belongs to the TRAFAC class translation factor GTPase superfamily. Classic translation factor GTPase family. PrfC subfamily.

The protein resides in the cytoplasm. Functionally, increases the formation of ribosomal termination complexes and stimulates activities of RF-1 and RF-2. It binds guanine nucleotides and has strong preference for UGA stop codons. It may interact directly with the ribosome. The stimulation of RF-1 and RF-2 is significantly reduced by GTP and GDP, but not by GMP. This chain is Peptide chain release factor 3, found in Buchnera aphidicola subsp. Schizaphis graminum (strain Sg).